The sequence spans 396 residues: Elongation factor Tu 1 (396 aa).

In terms of domain architecture, tr-type G spans 10-206 (KPHVNVGTIG…ALDTYIPTPE (197 aa)). The segment at 19–26 (GHVDHGKT) is G1. A GTP-binding site is contributed by 19 to 26 (GHVDHGKT). Mg(2+) is bound at residue T26. The tract at residues 60–64 (GITIN) is G2. The interval 81–84 (DCPG) is G3. Residues 81-85 (DCPGH) and 136-139 (NKCD) contribute to the GTP site. Residues 136-139 (NKCD) form a G4 region. The G5 stretch occupies residues 174–176 (SAK).

The protein belongs to the TRAFAC class translation factor GTPase superfamily. Classic translation factor GTPase family. EF-Tu/EF-1A subfamily. In terms of assembly, monomer.

It is found in the cytoplasm. It carries out the reaction GTP + H2O = GDP + phosphate + H(+). Its function is as follows. GTP hydrolase that promotes the GTP-dependent binding of aminoacyl-tRNA to the A-site of ribosomes during protein biosynthesis. The sequence is that of Elongation factor Tu 1 from Acidovorax sp. (strain JS42).